The sequence spans 403 residues: Phosphoglycerate kinase (403 aa).

Residues 24-26 (DLN), arginine 39, 62-65 (HLGR), arginine 121, and arginine 161 each bind substrate. ATP contacts are provided by residues lysine 211, glycine 299, glutamate 330, and 359-362 (GGDS).

It belongs to the phosphoglycerate kinase family. As to quaternary structure, monomer.

It is found in the cytoplasm. The enzyme catalyses (2R)-3-phosphoglycerate + ATP = (2R)-3-phospho-glyceroyl phosphate + ADP. It participates in carbohydrate degradation; glycolysis; pyruvate from D-glyceraldehyde 3-phosphate: step 2/5. This is Phosphoglycerate kinase from Corynebacterium jeikeium (strain K411).